The sequence spans 1059 residues: Ceruloplasmin (1059 aa).

Residues 1-19 form the signal peptide; it reads MKFLLLSALLFLHSSLAWT. Plastocyanin-like domains lie at 20–199, 208–356, 369–554, 564–712, 724–894, and 902–1055; these read REKH…LILC, KEEN…VRDC, HVRH…MKIC, RQKD…VNQC, GERT…LIVC, and FNPK…PNQE. Positions 55, 64, and 67 each coordinate Na(+). 2 residues coordinate Cu(2+): His-120 and His-122. His-120 contacts O2. Lys-128 lines the Ca(2+) pocket. An N-linked (GlcNAc...) asparagine glycan is attached at Asn-138. Residues Gln-143, Asp-146, and Asp-147 each coordinate Ca(2+). Cys-173 and Cys-199 are disulfide-bonded. Cu(2+) is bound by residues His-179 and His-181. An O2-binding site is contributed by His-179. N-linked (GlcNAc...) asparagine glycosylation is present at Asn-226. Position 255 (Ser-255) interacts with Na(+). Residues Cys-275 and Cys-356 are joined by a disulfide bond. Cu(2+)-binding residues include His-294, Cys-337, and His-342. N-linked (GlcNAc...) asparagine glycosylation is present at Asn-396. Positions 407, 416, and 419 each coordinate Na(+). Residues Cys-528 and Cys-554 are joined by a disulfide bond. The N-linked (GlcNAc...) asparagine glycan is linked to Asn-582. Ser-611 lines the Na(+) pocket. A disulfide bridge connects residues Cys-631 and Cys-712. His-650, Cys-693, His-698, and Met-703 together coordinate Cu(2+). Residue Cys-693 is the Nucleophile; for glutathione peroxidase activity of the active site. N-linked (GlcNAc...) asparagine glycosylation is present at Asn-756. Na(+) contacts are provided by Phe-761, Gly-770, and Tyr-773. A disulfide bridge connects residues Cys-868 and Cys-894. A glycan (N-linked (GlcNAc...) asparagine) is linked at Asn-920. Ser-949 contributes to the Na(+) binding site. Residues His-988, His-991, His-993, His-1033, Cys-1034, His-1035, His-1039, and Met-1044 each contribute to the Cu(2+) site. Positions 991 and 993 each coordinate O2. Residue His-1035 participates in O2 binding.

The protein belongs to the multicopper oxidase family. As to quaternary structure, found in a complex with MPO and LTF; interacts directly with MPO and LTF, which allows Fe(3+) incorporation into LTF, activation of CP ferroxidase activity and protection of CP antioxidant properties by MPO. Requires Cu(2+) as cofactor. In terms of tissue distribution, synthesized in liver and secreted into the plasma. Also choroid plexus, yolk sac, placenta, and testis; not in stomach and small intestine. Fetal lung and liver.

The protein localises to the secreted. It catalyses the reaction 4 Fe(2+) + O2 + 4 H(+) = 4 Fe(3+) + 2 H2O. It carries out the reaction 4 Cu(+) + O2 + 4 H(+) = 4 Cu(2+) + 2 H2O. The catalysed reaction is a hydroperoxide + 2 glutathione = an alcohol + glutathione disulfide + H2O. The enzyme catalyses 4 nitric oxide + O2 + 2 H2O = 4 nitrite + 4 H(+). It catalyses the reaction 2 glutathione + H2O2 = glutathione disulfide + 2 H2O. Its function is as follows. Multifunctional blue, copper-binding (6-7 atoms per molecule) glycoprotein. It has ferroxidase activity oxidizing Fe(2+) to Fe(3+) without releasing radical oxygen species. It is involved in iron transport across the cell membrane. Copper ions provide a large number of enzymatic activites. Oxidizes highly toxic ferrous ions to the ferric state for further incorporation onto apo-transferrins, catalyzes Cu(+) oxidation and promotes the oxidation of biogenic amines such as norepinephrin and serotonin. Provides Cu(2+) ions for the ascorbate-mediated deaminase degradation of the heparan sulfate chains of GPC1. Has glutathione peroxidase-like activity, can remove both hydrogen peroxide and lipid hydroperoxide in the presence of thiols. Also shows NO-oxidase and NO2 synthase activities that determine endocrine NO homeostasis. This is Ceruloplasmin (Cp) from Rattus norvegicus (Rat).